The following is a 214-amino-acid chain: ATP-dependent Clp protease proteolytic subunit (214 aa).

Ser-106 serves as the catalytic Nucleophile. His-131 is a catalytic residue.

It belongs to the peptidase S14 family. Fourteen ClpP subunits assemble into 2 heptameric rings which stack back to back to give a disk-like structure with a central cavity, resembling the structure of eukaryotic proteasomes.

It is found in the cytoplasm. The catalysed reaction is Hydrolysis of proteins to small peptides in the presence of ATP and magnesium. alpha-casein is the usual test substrate. In the absence of ATP, only oligopeptides shorter than five residues are hydrolyzed (such as succinyl-Leu-Tyr-|-NHMec, and Leu-Tyr-Leu-|-Tyr-Trp, in which cleavage of the -Tyr-|-Leu- and -Tyr-|-Trp bonds also occurs).. Cleaves peptides in various proteins in a process that requires ATP hydrolysis. Has a chymotrypsin-like activity. Plays a major role in the degradation of misfolded proteins. This chain is ATP-dependent Clp protease proteolytic subunit, found in Rhodopseudomonas palustris (strain BisB5).